We begin with the raw amino-acid sequence, 596 residues long: Aspartate--tRNA(Asp/Asn) ligase (596 aa).

Glutamate 172 serves as a coordination point for L-aspartate. Residues 196–199 are aspartate; sequence QLFK. L-aspartate is bound at residue arginine 218. ATP contacts are provided by residues 218 to 220 and glutamine 227; that span reads RDE. Histidine 455 contributes to the L-aspartate binding site. Position 489 (glutamate 489) interacts with ATP. An L-aspartate-binding site is contributed by arginine 496. 541–544 contributes to the ATP binding site; that stretch reads GLDR.

This sequence belongs to the class-II aminoacyl-tRNA synthetase family. Type 1 subfamily. Homodimer.

It is found in the cytoplasm. It catalyses the reaction tRNA(Asx) + L-aspartate + ATP = L-aspartyl-tRNA(Asx) + AMP + diphosphate. Its function is as follows. Aspartyl-tRNA synthetase with relaxed tRNA specificity since it is able to aspartylate not only its cognate tRNA(Asp) but also tRNA(Asn). Reaction proceeds in two steps: L-aspartate is first activated by ATP to form Asp-AMP and then transferred to the acceptor end of tRNA(Asp/Asn). The polypeptide is Aspartate--tRNA(Asp/Asn) ligase (Bordetella bronchiseptica (strain ATCC BAA-588 / NCTC 13252 / RB50) (Alcaligenes bronchisepticus)).